The chain runs to 486 residues: Cysteine--tRNA ligase (486 aa).

Cysteine 29 is a binding site for Zn(2+). Positions 31–41 match the 'HIGH' region motif; the sequence is VTVYDYCHLGH. Positions 214, 239, and 243 each coordinate Zn(2+). Positions 271 to 275 match the 'KMSKS' region motif; the sequence is KMSKS. Lysine 274 is a binding site for ATP.

The protein belongs to the class-I aminoacyl-tRNA synthetase family. In terms of assembly, monomer. Zn(2+) serves as cofactor.

The protein resides in the cytoplasm. The catalysed reaction is tRNA(Cys) + L-cysteine + ATP = L-cysteinyl-tRNA(Cys) + AMP + diphosphate. The protein is Cysteine--tRNA ligase of Trichormus variabilis (strain ATCC 29413 / PCC 7937) (Anabaena variabilis).